We begin with the raw amino-acid sequence, 655 residues long: RalA-binding protein 1-A (655 aa).

A disordered region spans residues Met1–Asp153. The segment covering Asp52 to His68 has biased composition (basic and acidic residues). Residue Gly69–Lys74 coordinates ATP. Basic residues-rich tracts occupy residues Gly69–Glu79 and Lys102–Ser118. The nuclear localization signal stretch occupies residues Lys102–Lys119. Positions Lys119–Thr150 are enriched in basic and acidic residues. A run of 2 repeats spans residues Glu133–Lys137 and Glu138–Lys142. Residues Glu133 to Lys142 form a 2 X 5 AA tandem repeats of E-[D/E]-K-H-K region. Residues Leu149–Phe214 are mediates association with membranes and could form transmembrane domains. In terms of domain architecture, Rho-GAP spans Ile187–Met383. Residues Arg398–Met495 form a mediates interaction with RALA and RALB region. Ala413 to Lys420 serves as a coordination point for ATP. Residues Ala494 to Ile510 form a required to maintain nuclear localization region. The interval Glu496–Ile655 is mediates interaction with REPS1 and REPS2. Disordered regions lie at residues Ile520–Leu548 and Leu600–Ile655. Residues Glu532–Leu548 show a composition bias toward acidic residues. Over residues Asn619–Pro630 the composition is skewed to basic and acidic residues.

Interacts with the active, GTP-bound form of ralB and ralA.

It localises to the cell membrane. The protein localises to the cytoplasm. It is found in the cytosol. Its subcellular location is the cytoskeleton. The protein resides in the spindle pole. It localises to the nucleus. The protein localises to the mitochondrion. It is found in the cell projection. Its subcellular location is the lamellipodium. It catalyses the reaction an S-substituted glutathione(in) + ATP + H2O = an S-substituted glutathione(out) + ADP + phosphate + H(+). It carries out the reaction ATP + H2O + xenobioticSide 1 = ADP + phosphate + xenobioticSide 2.. The catalysed reaction is leukotriene C4(in) + ATP + H2O = leukotriene C4(out) + ADP + phosphate + H(+). Functionally, multifunctional protein that functions as a downstream effector of ralA and ralB. As a GTPase-activating protein/GAP can inactivate CDC42 and RAC1 by stimulating their GTPase activity. As part of the Ral signaling pathway, may also regulate ligand-dependent EGF and insulin receptors-mediated endocytosis. During mitosis, may act as a scaffold protein in the phosphorylation of EPSIN/EPN1 by the mitotic kinase cyclin B-CDK1, preventing endocytosis during that phase of the cell cycle. During mitosis, also controls mitochondrial fission as an effector of ralA. Recruited to mitochondrion by ralA, acts as a scaffold to foster the mitotic kinase cyclin B-CDK1-mediated phosphorylation and activation of DNM1L. Acts on the cytoskeleton, to regulate pigment distribution and to regulate gastrulation. Could also function as a primary ATP-dependent active transporter for glutathione conjugates of electrophiles. May also actively catalyze the efflux of a wide range of substrates including xenobiotics like doxorubicin (DOX) contributing to cell multidrug resistance. This is RalA-binding protein 1-A (ralbp1-a) from Xenopus laevis (African clawed frog).